The following is a 288-amino-acid chain: UTP--glucose-1-phosphate uridylyltransferase (288 aa).

Belongs to the UDPGP type 2 family.

The enzyme catalyses alpha-D-glucose 1-phosphate + UTP + H(+) = UDP-alpha-D-glucose + diphosphate. Its pathway is glycolipid metabolism; diglucosyl-diacylglycerol biosynthesis. In terms of biological role, catalyzes the formation of UDP-glucose from glucose-1-phosphate and UTP. This is an intermediate step in the biosynthesis of diglucosyl-diacylglycerol (Glc2-DAG), i.e. the predominant glycolipid found in the S.aureus membrane, which is also used as a membrane anchor for lipoteichoic acid (LTA). This Staphylococcus aureus (strain MRSA252) protein is UTP--glucose-1-phosphate uridylyltransferase (gtaB).